Reading from the N-terminus, the 349-residue chain is Anthranilate phosphoribosyltransferase (349 aa).

5-phospho-alpha-D-ribose 1-diphosphate-binding positions include Gly-82, 85 to 86, 92 to 95, 110 to 118, and Ser-122; these read GD, NVST, and KHGNRAVSG. Gly-82 lines the anthranilate pocket. Position 94 (Ser-94) interacts with Mg(2+). Asn-113 is an anthranilate binding site. Arg-168 is a binding site for anthranilate. Mg(2+) contacts are provided by Asp-227 and Glu-228.

The protein belongs to the anthranilate phosphoribosyltransferase family. Homodimer. Mg(2+) is required as a cofactor.

It carries out the reaction N-(5-phospho-beta-D-ribosyl)anthranilate + diphosphate = 5-phospho-alpha-D-ribose 1-diphosphate + anthranilate. It participates in amino-acid biosynthesis; L-tryptophan biosynthesis; L-tryptophan from chorismate: step 2/5. Catalyzes the transfer of the phosphoribosyl group of 5-phosphorylribose-1-pyrophosphate (PRPP) to anthranilate to yield N-(5'-phosphoribosyl)-anthranilate (PRA). This Pseudomonas putida (Arthrobacter siderocapsulatus) protein is Anthranilate phosphoribosyltransferase.